We begin with the raw amino-acid sequence, 731 residues long: EF-hand calcium-binding domain-containing protein 4B (731 aa).

The interval Met-1–Thr-45 is disordered. One can recognise an EF-hand domain in the interval Leu-84–Ser-119. Ca(2+)-binding residues include Asp-97, Asp-99, Asn-101, Tyr-103, and Glu-108. A coiled-coil region spans residues Leu-201 to Glu-382. A proline-rich domain (PRD) which mediates interaction with VAV1 region spans residues Met-349–Ser-540. 2 disordered regions span residues Ser-426–Arg-466 and Cys-494–Gly-528. The GTP site is built by Ser-554, Val-556, Gly-557, Lys-558, Thr-559, Ser-560, Ser-571, Pro-572, and Thr-577. Thr-559 serves as a coordination point for Mg(2+). The segment at Pro-572 to Ile-580 is switch-I. Mg(2+)-binding residues include Thr-577 and Asp-600. GTP-binding residues include Gly-603, Asn-658, Lys-659, Asp-661, and Ala-689. The segment at Gly-603–Asp-619 is switch-II. Residue Cys-729 is the site of S-geranylgeranyl cysteine attachment.

Belongs to the EFCAB4 family. As to quaternary structure, interacts with ORAI1 and STIM1; the interaction is direct and takes place in absence of Ca(2+). Forms a complex with ORAI1 and STIM1 at low concentration of Ca(2+), the complex dissociates at elevated Ca(2+) concentrations. Interacts with ORAI2 and ORAI3. Interacts with DYNC1H1. Interacts with the dynein-dynactin complex in a Ca(2+)-dependent manner. Interacts with VAV1. Mg(2+) is required as a cofactor. As to expression, expressed in the Jurkat T-cell line. Expressed in endothelial cells. Expressed in Weibel-Palade bodies (which are P-selectin/SELP negative) in endothelial cells. Expressed in the Jurkat T-cell line.

Its subcellular location is the cytoplasm. It localises to the cytoskeleton. The protein resides in the microtubule organizing center. The protein localises to the cell membrane. It is found in the golgi apparatus membrane. Its subcellular location is the golgi apparatus. It localises to the trans-Golgi network membrane. The protein resides in the vesicle. It catalyses the reaction GTP + H2O = GDP + phosphate + H(+). Its function is as follows. Ca(2+)-binding protein that plays a key role in store-operated Ca(2+) entry (SOCE) in T-cells by regulating CRAC channel activation. Acts as a cytoplasmic calcium-sensor that facilitates the clustering of ORAI1 and STIM1 at the junctional regions between the plasma membrane and the endoplasmic reticulum upon low Ca(2+) concentration. It thereby regulates CRAC channel activation, including translocation and clustering of ORAI1 and STIM1. Upon increase of cytoplasmic Ca(2+) resulting from opening of CRAC channels, dissociates from ORAI1 and STIM1, thereby destabilizing the ORAI1-STIM1 complex. In terms of biological role, rab GTPase that mediates the trafficking of Weibel-Palade bodies (WPBs) to microtubule organizing center (MTOC) in endothelial cells in response to acute inflammatory stimuli. During histamine (but not thrombin) stimulation of endothelial cells, the dynein-bound form induces retrograde transport of a subset of WPBs along microtubules to the MTOC in a Ca(2+)-independent manner and its GTPase activity is essential for this function. Ca(2+)-regulated dynein adapter protein that activates dynein-mediated transport and dynein-dynactin motility on microtubules and regulates endosomal trafficking of CD47. Acts as an intracellular signaling module bridging two important T-cell receptor (TCR) signaling pathways, Ca(2+)-NFAT and JNK, to affect T-cell activation. In resting T-cells, is predominantly localized near TGN network in a GTP-bound form, upon TCR stimulation, localizes at the immunological synapse via interaction with VAV1 to activate downstream Ca(2+)-NFAT and JNK signaling pathways. Plays a role in T-helper 1 (Th1) cell differentiation and T-helper 17 (Th17) cell effector function. Plays a role in store-operated Ca(2+) entry (SOCE) in T-cells by regulating CRAC channel activation. This is EF-hand calcium-binding domain-containing protein 4B from Homo sapiens (Human).